A 236-amino-acid chain; its full sequence is 2,3,4,5-tetrahydropyridine-2,6-dicarboxylate N-acetyltransferase (236 aa).

Belongs to the transferase hexapeptide repeat family. DapH subfamily.

The enzyme catalyses (S)-2,3,4,5-tetrahydrodipicolinate + acetyl-CoA + H2O = L-2-acetamido-6-oxoheptanedioate + CoA. The protein operates within amino-acid biosynthesis; L-lysine biosynthesis via DAP pathway; LL-2,6-diaminopimelate from (S)-tetrahydrodipicolinate (acetylase route): step 1/3. Its function is as follows. Catalyzes the transfer of an acetyl group from acetyl-CoA to tetrahydrodipicolinate. This is 2,3,4,5-tetrahydropyridine-2,6-dicarboxylate N-acetyltransferase from Clostridium beijerinckii (strain ATCC 51743 / NCIMB 8052) (Clostridium acetobutylicum).